The sequence spans 260 residues: HMP-PP phosphatase (260 aa).

Catalysis depends on D8, which acts as the Nucleophile. Mg(2+) is bound by residues D8, D10, and D212.

The protein belongs to the HAD-like hydrolase superfamily. Cof family. The cofactor is Mg(2+).

It catalyses the reaction 4-amino-2-methyl-5-(diphosphooxymethyl)pyrimidine + H2O = 4-amino-2-methyl-5-(phosphooxymethyl)pyrimidine + phosphate + H(+). In terms of biological role, catalyzes the hydrolysis of 4-amino-2-methyl-5-hydroxymethylpyrimidine pyrophosphate (HMP-PP) to 4-amino-2-methyl-5-hydroxymethylpyrimidine phosphate (HMP-P). This Shigella boydii serotype 4 (strain Sb227) protein is HMP-PP phosphatase.